The sequence spans 199 residues: Recombination protein RecR (199 aa).

The C4-type zinc-finger motif lies at 57-72; sequence CRQCRTLTEDELCPQC. The 95-residue stretch at 80–174 folds into the Toprim domain; the sequence is SLLCVVQSPV…TISRIAHGVP (95 aa).

This sequence belongs to the RecR family.

In terms of biological role, may play a role in DNA repair. It seems to be involved in an RecBC-independent recombinational process of DNA repair. It may act with RecF and RecO. In Stutzerimonas stutzeri (strain A1501) (Pseudomonas stutzeri), this protein is Recombination protein RecR.